The following is a 156-amino-acid chain: Endoribonuclease YbeY (156 aa).

The Zn(2+) site is built by H115, H119, and H125.

This sequence belongs to the endoribonuclease YbeY family. Zn(2+) is required as a cofactor.

Its subcellular location is the cytoplasm. Its function is as follows. Single strand-specific metallo-endoribonuclease involved in late-stage 70S ribosome quality control and in maturation of the 3' terminus of the 16S rRNA. The protein is Endoribonuclease YbeY of Actinobacillus succinogenes (strain ATCC 55618 / DSM 22257 / CCUG 43843 / 130Z).